Here is a 202-residue protein sequence, read N- to C-terminus: LexA repressor (202 aa).

Residues 28–48 (RAEIAQRLGFRSPNAAEEHLK) constitute a DNA-binding region (H-T-H motif). Catalysis depends on for autocatalytic cleavage activity residues S119 and K156.

This sequence belongs to the peptidase S24 family. As to quaternary structure, homodimer.

The enzyme catalyses Hydrolysis of Ala-|-Gly bond in repressor LexA.. Its function is as follows. Represses a number of genes involved in the response to DNA damage (SOS response), including recA and lexA. Binds to the 16 bp palindromic sequence 5'-CTGTATATATATACAG-3'. In the presence of single-stranded DNA, RecA interacts with LexA causing an autocatalytic cleavage which disrupts the DNA-binding part of LexA, leading to derepression of the SOS regulon and eventually DNA repair. This Cronobacter sakazakii (strain ATCC BAA-894) (Enterobacter sakazakii) protein is LexA repressor.